The chain runs to 369 residues: Tyrosyl-DNA phosphodiesterase 2 (369 aa).

The span at M1–G17 shows a compositional bias: basic and acidic residues. Disordered regions lie at residues M1–E26 and A80–D117. Over residues D99–S112 the composition is skewed to low complexity. The segment at N127–L131 is interaction with 5' end of substrate DNA. Positions 129 and 159 each coordinate Mg(2+). Residues H233–R238 are interaction with 5' end of substrate DNA. Catalysis depends on D269, which acts as the Proton donor/acceptor. An interaction with 5' end of substrate DNA region spans residues N271–R273.

The protein belongs to the CCR4/nocturin family. TTRAP/TDP2 subfamily. Requires Mg(2+) as cofactor. The cofactor is Mn(2+).

Its subcellular location is the nucleus. The protein localises to the PML body. Functionally, DNA repair enzyme that can remove a variety of covalent adducts from DNA through hydrolysis of a 5'-phosphodiester bond, giving rise to DNA with a free 5' phosphate. Catalyzes the hydrolysis of dead-end complexes between DNA and the topoisomerase 2 (TOP2) active site tyrosine residue. Hydrolyzes 5'-phosphoglycolates on protruding 5' ends on DNA double-strand breaks (DSBs) due to DNA damage by radiation and free radicals. The 5'-tyrosyl DNA phosphodiesterase activity can enable the repair of TOP2-induced DSBs without the need for nuclease activity, creating a 'clean' DSB with 5'-phosphate termini that are ready for ligation. Also has 3'-tyrosyl DNA phosphodiesterase activity, but less efficiently and much slower than TDP1. This chain is Tyrosyl-DNA phosphodiesterase 2 (TDP2), found in Gallus gallus (Chicken).